The chain runs to 551 residues: 2-(3-amino-3-carboxypropyl)histidine synthase subunit 2 (551 aa).

Residues C116, C137, and C371 each contribute to the [4Fe-4S] cluster site.

The protein belongs to the DPH1/DPH2 family. DPH2 subfamily. Component of the 2-(3-amino-3-carboxypropyl)histidine synthase complex composed of DPH1, DPH2, DPH3 and a NADH-dependent reductase, predominantly CBR1. It depends on [4Fe-4S] cluster as a cofactor.

Its subcellular location is the cytoplasm. It participates in protein modification; peptidyl-diphthamide biosynthesis. Functionally, required for the first step of diphthamide biosynthesis, a post-translational modification of histidine which occurs in elongation factor 2. DPH1 and DPH2 transfer a 3-amino-3-carboxypropyl (ACP) group from S-adenosyl-L-methionine (SAM) to a histidine residue, the reaction is assisted by a reduction system comprising DPH3 and a NADH-dependent reductase, predominantly CBR1. Facilitates the reduction of the catalytic iron-sulfur cluster found in the DPH1 subunit. This is 2-(3-amino-3-carboxypropyl)histidine synthase subunit 2 (DPH2) from Candida glabrata (strain ATCC 2001 / BCRC 20586 / JCM 3761 / NBRC 0622 / NRRL Y-65 / CBS 138) (Yeast).